The sequence spans 257 residues: Imidazole glycerol phosphate synthase subunit HisF (257 aa).

Active-site residues include Asp-11 and Asp-130.

Belongs to the HisA/HisF family. As to quaternary structure, heterodimer of HisH and HisF.

The protein localises to the cytoplasm. It carries out the reaction 5-[(5-phospho-1-deoxy-D-ribulos-1-ylimino)methylamino]-1-(5-phospho-beta-D-ribosyl)imidazole-4-carboxamide + L-glutamine = D-erythro-1-(imidazol-4-yl)glycerol 3-phosphate + 5-amino-1-(5-phospho-beta-D-ribosyl)imidazole-4-carboxamide + L-glutamate + H(+). It participates in amino-acid biosynthesis; L-histidine biosynthesis; L-histidine from 5-phospho-alpha-D-ribose 1-diphosphate: step 5/9. Functionally, IGPS catalyzes the conversion of PRFAR and glutamine to IGP, AICAR and glutamate. The HisF subunit catalyzes the cyclization activity that produces IGP and AICAR from PRFAR using the ammonia provided by the HisH subunit. The protein is Imidazole glycerol phosphate synthase subunit HisF of Shewanella baltica (strain OS155 / ATCC BAA-1091).